The following is a 180-amino-acid chain: Adenine phosphoribosyltransferase (180 aa).

Ala2 bears the N-acetylalanine mark. A phosphoserine mark is found at Ser4, Ser15, and Ser30. Tyr60 carries the phosphotyrosine modification. Position 66 is a phosphoserine (Ser66). N6-acetyllysine is present on Lys114. Thr135 carries the phosphothreonine modification.

It belongs to the purine/pyrimidine phosphoribosyltransferase family. As to quaternary structure, homodimer.

The protein resides in the cytoplasm. It catalyses the reaction AMP + diphosphate = 5-phospho-alpha-D-ribose 1-diphosphate + adenine. It participates in purine metabolism; AMP biosynthesis via salvage pathway; AMP from adenine: step 1/1. Functionally, catalyzes a salvage reaction resulting in the formation of AMP, that is energically less costly than de novo synthesis. The polypeptide is Adenine phosphoribosyltransferase (Homo sapiens (Human)).